Here is a 1132-residue protein sequence, read N- to C-terminus: Eisosome protein SEG2 (1132 aa).

Over residues Lys-76 to Gly-95 the composition is skewed to polar residues. Disordered regions lie at residues Lys-76–Gly-142 and Arg-171–His-225. A compositionally biased stretch (basic and acidic residues) spans Ala-101 to Gly-113. The span at Lys-115–Gly-142 shows a compositional bias: polar residues. Ser-137 carries the post-translational modification Phosphoserine. The segment covering Gly-208–His-225 has biased composition (basic and acidic residues). At Ser-280 the chain carries Phosphoserine. The disordered stretch occupies residues Pro-404–Gln-429. A phosphoserine mark is found at Ser-504 and Ser-507. Disordered stretches follow at residues Gly-510–Met-938 and Glu-961–Thr-993. Residue Lys-526 forms a Glycyl lysine isopeptide (Lys-Gly) (interchain with G-Cter in ubiquitin) linkage. Composition is skewed to acidic residues over residues Asp-550–Glu-561 and Lys-595–Tyr-644. Ser-556 is modified (phosphoserine). Polar residues-rich tracts occupy residues Ser-688–Asn-699 and Tyr-710–Thr-735. Residue Lys-743 forms a Glycyl lysine isopeptide (Lys-Gly) (interchain with G-Cter in ubiquitin) linkage. Low complexity predominate over residues Ser-761 to Ser-773. Polar residues-rich tracts occupy residues Pro-774 to Gln-810 and Asn-827 to His-845. Low complexity predominate over residues Pro-850–Tyr-860. Residues Pro-916 to Lys-930 show a composition bias toward basic and acidic residues. A phosphoserine mark is found at Ser-980 and Ser-1022.

This sequence belongs to the SEG1 family. As to quaternary structure, component of eisosomes, large cytoplasmic protein assemblies that localize to specialized domains termed MCCs on the plasma membrane.

It localises to the cell membrane. Likely plays only a minor role in eisosome assembly. The protein is Eisosome protein SEG2 (SEG2) of Saccharomyces cerevisiae (strain ATCC 204508 / S288c) (Baker's yeast).